We begin with the raw amino-acid sequence, 134 residues long: Profilin-2 (134 aa).

A disulfide bridge connects residues cysteine 13 and cysteine 118. The short motif at 84 to 100 (AVIRGKKGSGGITIKKT) is the Involved in PIP2 interaction element. The residue at position 114 (threonine 114) is a Phosphothreonine.

Belongs to the profilin family. In terms of assembly, occurs in many kinds of cells as a complex with monomeric actin in a 1:1 ratio. Phosphorylated by MAP kinases.

It is found in the cytoplasm. It localises to the cytoskeleton. In terms of biological role, binds to actin and affects the structure of the cytoskeleton. At high concentrations, profilin prevents the polymerization of actin, whereas it enhances it at low concentrations. The protein is Profilin-2 of Olea europaea (Common olive).